Reading from the N-terminus, the 380-residue chain is Cytochrome b (380 aa).

4 consecutive transmembrane segments (helical) span residues 34-54 (FGSLLAVCLATQIITGLLLAM), 78-99 (WLIRNLHANGASFFFICIFLHI), 114-134 (WNTGVVLLLTLMATAFVGYVL), and 179-199 (FFALHFLLPFVIAGITIIHLT). Positions 84 and 98 each coordinate heme b. The heme b site is built by histidine 183 and histidine 197. Histidine 202 lines the a ubiquinone pocket. 4 helical membrane passes run 227–247 (LKDILGLTLMFIPFLTLALFS), 289–309 (LGGVLALAASVLILLLIPFLH), 321–341 (LSQILFWLLVANLLILTWIGS), and 348–368 (FIIIGQMASFSYFSILLILFP).

This sequence belongs to the cytochrome b family. In terms of assembly, the cytochrome bc1 complex contains 11 subunits: 3 respiratory subunits (MT-CYB, CYC1 and UQCRFS1), 2 core proteins (UQCRC1 and UQCRC2) and 6 low-molecular weight proteins (UQCRH/QCR6, UQCRB/QCR7, UQCRQ/QCR8, UQCR10/QCR9, UQCR11/QCR10 and a cleavage product of UQCRFS1). This cytochrome bc1 complex then forms a dimer. It depends on heme b as a cofactor.

It is found in the mitochondrion inner membrane. Functionally, component of the ubiquinol-cytochrome c reductase complex (complex III or cytochrome b-c1 complex) that is part of the mitochondrial respiratory chain. The b-c1 complex mediates electron transfer from ubiquinol to cytochrome c. Contributes to the generation of a proton gradient across the mitochondrial membrane that is then used for ATP synthesis. This Pavo muticus (Green peafowl) protein is Cytochrome b (MT-CYB).